We begin with the raw amino-acid sequence, 225 residues long: MKLVVSVTPRNLEEAQQIDAQRFVDADLIEWRADFLEKEEILKVAPAIFEKFAGRELIFTLRTKDEGGHIQLSDDEYVEMIKKVAQLYQPDYVDFEYFSHKDKIDEMLEFPNLVLSYHNFEETPENMMEILSELTSLTPKAVKVSVMANSGQDVLDLMNYTRGFKTLNPEQEYVTISMGRVGRISRIASDLTGSSWSFASLDEATAPGQISLSSMKKIRDILNEN.

3-dehydroquinate contacts are provided by residues S6, 30-32 (EWR), and R62. The Proton donor/acceptor role is filled by H118. K143 serves as the catalytic Schiff-base intermediate with substrate. Positions 186, 205, and 209 each coordinate 3-dehydroquinate.

It belongs to the type-I 3-dehydroquinase family. Homodimer.

The enzyme catalyses 3-dehydroquinate = 3-dehydroshikimate + H2O. The protein operates within metabolic intermediate biosynthesis; chorismate biosynthesis; chorismate from D-erythrose 4-phosphate and phosphoenolpyruvate: step 3/7. Functionally, involved in the third step of the chorismate pathway, which leads to the biosynthesis of aromatic amino acids. Catalyzes the cis-dehydration of 3-dehydroquinate (DHQ) and introduces the first double bond of the aromatic ring to yield 3-dehydroshikimate. The polypeptide is 3-dehydroquinate dehydratase (Streptococcus gordonii (strain Challis / ATCC 35105 / BCRC 15272 / CH1 / DL1 / V288)).